The chain runs to 73 residues: Small ribosomal subunit protein bS18 (73 aa).

It belongs to the bacterial ribosomal protein bS18 family. In terms of assembly, part of the 30S ribosomal subunit. Forms a tight heterodimer with protein bS6.

Its function is as follows. Binds as a heterodimer with protein bS6 to the central domain of the 16S rRNA, where it helps stabilize the platform of the 30S subunit. The polypeptide is Small ribosomal subunit protein bS18 (Synechococcus sp. (strain RCC307)).